The sequence spans 78 residues: Large ribosomal subunit protein bL28 (78 aa).

This sequence belongs to the bacterial ribosomal protein bL28 family.

The chain is Large ribosomal subunit protein bL28 from Histophilus somni (strain 129Pt) (Haemophilus somnus).